The sequence spans 200 residues: Casparian strip membrane protein 1 (200 aa).

The Cytoplasmic segment spans residues 1–38 (MSTTIEIPAESSAVAKGKAPLIGASSSSYEKKGGYKKG). The helical transmembrane segment at 39–59 (IAIFDFILRLGAVISALSAAA) threads the bilayer. Residues 60 to 88 (TMGTSDETLPFFTQFFQFEAGYDDFPTFQ) lie on the Extracellular side of the membrane. A helical transmembrane segment spans residues 89-109 (FFVIAMGFVGGYLVLSLPFSV). The Cytoplasmic portion of the chain corresponds to 110–121 (VAIIRPHAVGIR). A helical membrane pass occupies residues 122–142 (LLLLILDTVALTLNTAAAAAA). At 143–175 (AAIVYLAHNGNQSANWLAVCQQFGDFCQKVSGG) the chain is on the extracellular side. An N-linked (GlcNAc...) asparagine glycan is attached at Asn-153. Residues 176–196 (VVASFVSVLVFLLLVVMSAVA) traverse the membrane as a helical segment. The Cytoplasmic portion of the chain corresponds to 197 to 200 (LRKH).

This sequence belongs to the Casparian strip membrane proteins (CASP) family. As to quaternary structure, homodimer and heterodimers.

The protein localises to the cell membrane. Regulates membrane-cell wall junctions and localized cell wall deposition. Required for establishment of the Casparian strip membrane domain (CSD) and the subsequent formation of Casparian strips, a cell wall modification of the root endodermis that determines an apoplastic barrier between the intraorganismal apoplasm and the extraorganismal apoplasm and prevents lateral diffusion. The sequence is that of Casparian strip membrane protein 1 from Ricinus communis (Castor bean).